We begin with the raw amino-acid sequence, 344 residues long: MENIAVLGAGSWGTALALVLADNGHHVRLWGHRTEQISEINEKRTNEKYLPGVRLPDAIIGYDDLCAALDGVAIVVLAVPTKAIRSVLADVRACLAKPITIVAVSKGIEPGTHKRVSEMVAEEMGEWLADVVVLSGPSHAEEVVLRHPTTVAVSSPNMEAARRIQDIFMNHHYFRVYTNPDLIGVEVGGALKNIIALAAGISDGLGYGDNAKAALITRGLAEIARLGCALGANPLTFAGLTGVGDLIVTCTSVHSRNWRAGYMLGQGKKLDEVLESMGMVVEGVRTTKAAYELAKELGVKMPITEALYDVLFAGKDPKEAVDSLMARGKKEEMDDLNNIFAEQE.

NADPH contacts are provided by serine 11, tryptophan 12, histidine 32, arginine 33, and lysine 106. Sn-glycerol 3-phosphate-binding residues include lysine 106, glycine 136, and serine 138. Alanine 140 serves as a coordination point for NADPH. Sn-glycerol 3-phosphate contacts are provided by lysine 192, aspartate 245, serine 255, arginine 256, and asparagine 257. Lysine 192 functions as the Proton acceptor in the catalytic mechanism. Arginine 256 serves as a coordination point for NADPH. 2 residues coordinate NADPH: valine 280 and glutamate 282.

The protein belongs to the NAD-dependent glycerol-3-phosphate dehydrogenase family.

The protein localises to the cytoplasm. The enzyme catalyses sn-glycerol 3-phosphate + NAD(+) = dihydroxyacetone phosphate + NADH + H(+). It catalyses the reaction sn-glycerol 3-phosphate + NADP(+) = dihydroxyacetone phosphate + NADPH + H(+). It participates in membrane lipid metabolism; glycerophospholipid metabolism. Functionally, catalyzes the reduction of the glycolytic intermediate dihydroxyacetone phosphate (DHAP) to sn-glycerol 3-phosphate (G3P), the key precursor for phospholipid synthesis. The chain is Glycerol-3-phosphate dehydrogenase [NAD(P)+] from Geobacillus kaustophilus (strain HTA426).